We begin with the raw amino-acid sequence, 383 residues long: ERCC4 domain-containing protein EP364R (383 aa).

One can recognise an ERCC4 domain in the interval 3–101; sequence FLVADHREHH…QLYFFVEGPA (99 aa). The interval 336-367 is disordered; the sequence is LHKVSDEASENASHDASENASDKVSSPTGHQT. Residues 347 to 356 show a composition bias toward basic and acidic residues; that stretch reads ASHDASENAS. The span at 357–367 shows a compositional bias: polar residues; that stretch reads DKVSSPTGHQT.

This sequence belongs to the asfivirus EP364R family.

In terms of biological role, plays a role in the inhibition of type I interferon signaling pathway. Mechanistically, specifically interacts with 2',3'-cGAMP and cleaves it via its phosphodiesterase activity. In turn, prevents 2',3'-cGAMP interaction with host ER-resident STING1 leading to inhibition of downstream signaling pathway and type I interferon production. The protein is ERCC4 domain-containing protein EP364R of Ornithodoros (relapsing fever ticks).